The chain runs to 39 residues: Photosystem II reaction center protein J (39 aa).

The chain crosses the membrane as a helical span at residues 9 to 29 (LWLVATVGGMAAITVLGIFIY).

The protein belongs to the PsbJ family. In terms of assembly, PSII is composed of 1 copy each of membrane proteins PsbA, PsbB, PsbC, PsbD, PsbE, PsbF, PsbH, PsbI, PsbJ, PsbK, PsbL, PsbM, PsbT, PsbX, PsbY, PsbZ, Psb30/Ycf12, at least 3 peripheral proteins of the oxygen-evolving complex and a large number of cofactors. It forms dimeric complexes.

Its subcellular location is the plastid. It is found in the chloroplast thylakoid membrane. Functionally, one of the components of the core complex of photosystem II (PSII). PSII is a light-driven water:plastoquinone oxidoreductase that uses light energy to abstract electrons from H(2)O, generating O(2) and a proton gradient subsequently used for ATP formation. It consists of a core antenna complex that captures photons, and an electron transfer chain that converts photonic excitation into a charge separation. This chain is Photosystem II reaction center protein J, found in Porphyra purpurea (Red seaweed).